A 297-amino-acid chain; its full sequence is Protease HtpX homolog (297 aa).

The next 2 membrane-spanning stretches (helical) occupy residues 5 to 25 (IFLF…VLSI) and 44 to 64 (IVAL…MSLL). His155 serves as a coordination point for Zn(2+). The active site involves Glu156. His159 contributes to the Zn(2+) binding site. The next 2 helical transmembrane spans lie at 170-190 (LLQG…AWAV) and 204-224 (FIAV…VVFA). Residue Glu230 participates in Zn(2+) binding.

This sequence belongs to the peptidase M48B family. Zn(2+) serves as cofactor.

It is found in the cell membrane. The chain is Protease HtpX homolog from Bacillus licheniformis (strain ATCC 14580 / DSM 13 / JCM 2505 / CCUG 7422 / NBRC 12200 / NCIMB 9375 / NCTC 10341 / NRRL NRS-1264 / Gibson 46).